Here is an 84-residue protein sequence, read N- to C-terminus: Cell division topological specificity factor (84 aa).

The protein belongs to the MinE family.

In terms of biological role, prevents the cell division inhibition by proteins MinC and MinD at internal division sites while permitting inhibition at polar sites. This ensures cell division at the proper site by restricting the formation of a division septum at the midpoint of the long axis of the cell. The chain is Cell division topological specificity factor from Ectopseudomonas mendocina (strain ymp) (Pseudomonas mendocina).